Here is a 209-residue protein sequence, read N- to C-terminus: Large ribosomal subunit protein uL3c (209 aa).

The disordered stretch occupies residues 132–154 (PMSHGSKNHRLPGSIGAGSTPGR).

This sequence belongs to the universal ribosomal protein uL3 family. Part of the 50S ribosomal subunit.

Its subcellular location is the plastid. It is found in the cyanelle. Its function is as follows. One of the primary rRNA binding proteins, it binds directly near the 3'-end of the 23S rRNA, where it nucleates assembly of the 50S subunit. The protein is Large ribosomal subunit protein uL3c (rpl3) of Cyanophora paradoxa.